Consider the following 242-residue polypeptide: Uridylate kinase (242 aa).

11-14 contacts ATP; the sequence is KLSG. An involved in allosteric activation by GTP region spans residues 19 to 24; the sequence is GNMGYG. Residue Gly-53 participates in UMP binding. The ATP site is built by Gly-54 and Arg-58. Residues Asp-73 and 134-141 each bind UMP; that span reads SGNPFFTT. Positions 161, 167, and 170 each coordinate ATP.

This sequence belongs to the UMP kinase family. In terms of assembly, homohexamer.

It is found in the cytoplasm. The catalysed reaction is UMP + ATP = UDP + ADP. It participates in pyrimidine metabolism; CTP biosynthesis via de novo pathway; UDP from UMP (UMPK route): step 1/1. Allosterically activated by GTP. Inhibited by UTP. Catalyzes the reversible phosphorylation of UMP to UDP. This chain is Uridylate kinase, found in Trichormus variabilis (strain ATCC 29413 / PCC 7937) (Anabaena variabilis).